Reading from the N-terminus, the 219-residue chain is GTP-binding protein Rab-3D (219 aa).

At Ala2 the chain carries N-acetylalanine. GDP is bound at residue Gly29–Ser37. GTP is bound by residues Ser31, Ser32, Val33, Gly34, Lys35, Thr36, Ser37, Pro49, and Ser53. Position 36 (Thr36) interacts with Mg(2+). The Switch 1 signature appears at Pro49–Asp58. Positions 54 and 77 each coordinate Mg(2+). Gly80 provides a ligand contact to GTP. A Switch 2 motif is present at residues Gly80 to Met96. Residue Thr86 is modified to Phosphothreonine. Residues Asn135, Lys136, Asp138, Ala166, and Lys167 each coordinate GTP. GDP is bound by residues Asn135–Asp138 and Ser165–Lys167. A Phosphoserine modification is found at Ser190. A disordered region spans residues Ser190–Cys219. Positions Pro193–Gly203 are enriched in low complexity. Over residues Thr209 to Cys219 the composition is skewed to pro residues. Residues Cys217 and Cys219 are each lipidated (S-geranylgeranyl cysteine). Cys219 is modified (cysteine methyl ester; partial).

It belongs to the small GTPase superfamily. Rab family. As to quaternary structure, interacts with RIMS1, RIMS2, RPH3A and RPH3AL. Interacts with RAB3IP. The GTP-bound form interacts with REP15. Interacts with CHM; phosphorylation at Thr-86 disrupts this interaction. Interacts with MADD (via uDENN domain); the GTP-bound form is preferred for interaction. Mg(2+) serves as cofactor. Post-translationally, in fetal glands the majority of the proteins are methylated, whereas in neonatal and adult glands, only 50% are methylated. Phosphorylation of Thr-86 in the switch II region by LRRK2 prevents the association of RAB regulatory proteins, including CHM. In terms of tissue distribution, highest levels found in lung.

It is found in the cell membrane. It catalyses the reaction GTP + H2O = GDP + phosphate + H(+). With respect to regulation, regulated by guanine nucleotide exchange factors (GEFs) which promote the exchange of bound GDP for free GTP. Regulated by GTPase activating proteins (GAPs) which increase the GTP hydrolysis activity. Inhibited by GDP dissociation inhibitors (GDIs) which prevent Rab-GDP dissociation. In terms of biological role, the small GTPases Rab are key regulators of intracellular membrane trafficking, from the formation of transport vesicles to their fusion with membranes. Rabs cycle between an inactive GDP-bound form and an active GTP-bound form that is able to recruit to membranes different sets of downstream effectors directly responsible for vesicle formation, movement, tethering and fusion. RAB3D may be involved in the insulin-induced exocytosis of GLUT4-containing vesicles in adipocytes. This Rattus norvegicus (Rat) protein is GTP-binding protein Rab-3D.